A 505-amino-acid polypeptide reads, in one-letter code: Flagellin (505 aa).

The protein belongs to the bacterial flagellin family.

Its subcellular location is the secreted. It localises to the bacterial flagellum. In terms of biological role, flagellin is the subunit protein which polymerizes to form the filaments of bacterial flagella. This chain is Flagellin (fliC), found in Salmonella moscow.